The chain runs to 139 residues: MSFMNPVDMVDEDAADLQFPKEFENAETLLISEVHMLLDHRKRQNESADEEQEFSEVFMKTYAYTDSFRKFKNKETIMSARSLLMQKKLHKFELAALGNLCPEAPEEAKALIPSLEGRFEDEELRQILDDIGTKRSLQY.

Belongs to the eukaryotic RPB4 RNA polymerase subunit family. In terms of assembly, RNA polymerase II consists of 12 different subunits.

The protein resides in the nucleus. The protein localises to the chromosome. Functionally, DNA-dependent RNA polymerase catalyzes the transcription of DNA into RNA using the four ribonucleoside triphosphates as substrates. Associates with POLR2G. The sequence is that of DNA-directed RNA polymerase II subunit Rpb4 from Drosophila melanogaster (Fruit fly).